We begin with the raw amino-acid sequence, 142 residues long: Large ribosomal subunit protein uL13 (142 aa).

It belongs to the universal ribosomal protein uL13 family. In terms of assembly, part of the 50S ribosomal subunit.

Functionally, this protein is one of the early assembly proteins of the 50S ribosomal subunit, although it is not seen to bind rRNA by itself. It is important during the early stages of 50S assembly. This chain is Large ribosomal subunit protein uL13, found in Methylococcus capsulatus (strain ATCC 33009 / NCIMB 11132 / Bath).